Reading from the N-terminus, the 363-residue chain is L-serine dehydratase/L-threonine deaminase (363 aa).

N-acetylalanine is present on A2. An N6-(pyridoxal phosphate)lysine modification is found at K41. The segment at R74 to P98 is disordered. P164 contributes to the pyridoxal 5'-phosphate binding site.

This sequence belongs to the serine/threonine dehydratase family. As to quaternary structure, homodimer. Pyridoxal 5'-phosphate serves as cofactor. In terms of tissue distribution, predominantly expressed in the periportal regions of the liver.

The protein resides in the cytoplasm. The enzyme catalyses L-serine = pyruvate + NH4(+). It carries out the reaction L-threonine = 2-oxobutanoate + NH4(+). The protein operates within carbohydrate biosynthesis; gluconeogenesis. In terms of biological role, catalyzes the pyridoxal-phosphate-dependent dehydrative deamination of L-threonine and L-serine to ammonia and alpha-ketobutyrate and pyruvate, respectively. The sequence is that of L-serine dehydratase/L-threonine deaminase (Sds) from Rattus norvegicus (Rat).